Reading from the N-terminus, the 574-residue chain is Choline transporter-like protein ctl1 (574 aa).

N-linked (GlcNAc...) asparagine glycosylation is found at asparagine 40 and asparagine 101. Transmembrane regions (helical) follow at residues 144-164 (WGLTFGFLTLALFTYSFLMVW), 189-209 (KDAIICMMLSVIWLFCLVAIP), 211-231 (FLYFLLASVPLTMFAFAVYLL), 246-266 (LMLLTGIILLVAPILLSYYVW), 291-311 (QITLIFISFLFSFYVLIFIWV), 336-356 (WVLASFYSLHFLWLCTFFHAL), 396-416 (YGLCAFSSFLVVITKVPLHFL), and 434-456 (TSASYVTSPLTLAYASIYSVPYM). Asparagine 457 carries N-linked (GlcNAc...) asparagine glycosylation. A run of 2 helical transmembrane segments spans residues 485–505 (LLAARSLLAIGVGVTSWNYSI) and 511–531 (FYGYIVGLLGGFLAWLIIGAI). Asparagine 558 is a glycosylation site (N-linked (GlcNAc...) asparagine).

This sequence belongs to the CTL (choline transporter-like) family. In terms of assembly, interacts with atg9.

Its subcellular location is the endoplasmic reticulum membrane. It is found in the preautophagosomal structure membrane. In terms of biological role, required for the normal organization of the preautophagosomal structure (PAS) and for the correct subcellular location of atg9. The protein is Choline transporter-like protein ctl1 (ctl1) of Schizosaccharomyces pombe (strain 972 / ATCC 24843) (Fission yeast).